Here is a 369-residue protein sequence, read N- to C-terminus: NAD(P)H-quinone oxidoreductase subunit 1, chloroplastic (369 aa).

The next 8 helical transmembrane spans lie at 29-49 (IWII…VLVI), 97-117 (IWLF…SYLV), 129-149 (LGIG…GLLM), 167-187 (AAQS…ISLL), 205-225 (LLGW…ISSL), 255-275 (FGLF…FVTV), 305-325 (IINA…FLFV), and 348-368 (FLLP…ILLL).

This sequence belongs to the complex I subunit 1 family. NDH is composed of at least 16 different subunits, 5 of which are encoded in the nucleus.

The protein resides in the plastid. Its subcellular location is the chloroplast thylakoid membrane. It catalyses the reaction a plastoquinone + NADH + (n+1) H(+)(in) = a plastoquinol + NAD(+) + n H(+)(out). It carries out the reaction a plastoquinone + NADPH + (n+1) H(+)(in) = a plastoquinol + NADP(+) + n H(+)(out). In terms of biological role, NDH shuttles electrons from NAD(P)H:plastoquinone, via FMN and iron-sulfur (Fe-S) centers, to quinones in the photosynthetic chain and possibly in a chloroplast respiratory chain. The immediate electron acceptor for the enzyme in this species is believed to be plastoquinone. Couples the redox reaction to proton translocation, and thus conserves the redox energy in a proton gradient. This Angiopteris evecta (Mule's foot fern) protein is NAD(P)H-quinone oxidoreductase subunit 1, chloroplastic.